The following is a 95-amino-acid chain: Aspartyl/glutamyl-tRNA(Asn/Gln) amidotransferase subunit C (95 aa).

This sequence belongs to the GatC family. In terms of assembly, heterotrimer of A, B and C subunits.

It carries out the reaction L-glutamyl-tRNA(Gln) + L-glutamine + ATP + H2O = L-glutaminyl-tRNA(Gln) + L-glutamate + ADP + phosphate + H(+). It catalyses the reaction L-aspartyl-tRNA(Asn) + L-glutamine + ATP + H2O = L-asparaginyl-tRNA(Asn) + L-glutamate + ADP + phosphate + 2 H(+). In terms of biological role, allows the formation of correctly charged Asn-tRNA(Asn) or Gln-tRNA(Gln) through the transamidation of misacylated Asp-tRNA(Asn) or Glu-tRNA(Gln) in organisms which lack either or both of asparaginyl-tRNA or glutaminyl-tRNA synthetases. The reaction takes place in the presence of glutamine and ATP through an activated phospho-Asp-tRNA(Asn) or phospho-Glu-tRNA(Gln). This Geotalea uraniireducens (strain Rf4) (Geobacter uraniireducens) protein is Aspartyl/glutamyl-tRNA(Asn/Gln) amidotransferase subunit C.